The primary structure comprises 300 residues: Putative 1-phosphofructokinase (300 aa).

ATP-binding positions include 214–219 (SDGAQG) and 246–247 (GD). The active-site Proton acceptor is the Asp247.

The protein belongs to the carbohydrate kinase PfkB family.

It carries out the reaction beta-D-fructose 1-phosphate + ATP = beta-D-fructose 1,6-bisphosphate + ADP + H(+). In terms of biological role, catalyzes the ATP-dependent phosphorylation of fructose-l-phosphate to fructose-l,6-bisphosphate. The protein is Putative 1-phosphofructokinase (fruK) of Mycoplasma pneumoniae (strain ATCC 29342 / M129 / Subtype 1) (Mycoplasmoides pneumoniae).